Here is a 36-residue protein sequence, read N- to C-terminus: Photosystem I reaction center subunit VIII (36 aa).

Residues 6-28 (LPSIFVPLVGLLFPAIAMVSLFF) form a helical membrane-spanning segment.

This sequence belongs to the PsaI family.

It is found in the plastid. The protein localises to the chloroplast thylakoid membrane. Its function is as follows. May help in the organization of the PsaL subunit. The sequence is that of Photosystem I reaction center subunit VIII from Nymphaea alba (White water-lily).